We begin with the raw amino-acid sequence, 622 residues long: Apical membrane antigen 1 (622 aa).

The first 24 residues, 1-24 (MRKLYCVLLLSAFEFTYMINFGRG), serve as a signal peptide directing secretion. The Extracellular portion of the chain corresponds to 25–546 (QNYWEHPYQN…EHKPTYDNMK (522 aa)). Disulfide bonds link Cys149–Cys302, Cys217–Cys247, Cys263–Cys275, Cys320–Cys418, and Cys337–Cys409. Residues Asn286, Asn371, Asn421, Asn422, and Asn499 are each glycosylated (N-linked (GlcNAc...) asparagine). Disulfide bonds link Cys443–Cys502, Cys490–Cys507, and Cys492–Cys509. Residues 547 to 567 (IIIASSAAVAVLATILMVYLY) form a helical membrane-spanning segment. Residues 568–622 (KRKGNAEKYDKMDEPQDYGKSTSRNDEMLDPEASFWGEEKRASHTTPVLMEKPYY) are Cytoplasmic-facing. Positions 577 to 607 (DKMDEPQDYGKSTSRNDEMLDPEASFWGEEK) are disordered.

It belongs to the apicomplexan parasites AMA1 family.

It is found in the membrane. Involved in parasite invasion of erythrocytes. In Plasmodium falciparum (isolate thtn / Thailand), this protein is Apical membrane antigen 1 (AMA-1).